A 95-amino-acid polypeptide reads, in one-letter code: MSFKPLHDRIAIKPIENEEKTKGGIIIPDTAKEKPMQGEIVAVGNGVLNKNGEIHPLELKVGDKVLYGKWAGTEIEIKGEKLIVMKESDVFGIIN.

The protein belongs to the GroES chaperonin family. Heptamer of 7 subunits arranged in a ring. Interacts with the chaperonin GroEL.

Its subcellular location is the cytoplasm. Its function is as follows. Together with the chaperonin GroEL, plays an essential role in assisting protein folding. The GroEL-GroES system forms a nano-cage that allows encapsulation of the non-native substrate proteins and provides a physical environment optimized to promote and accelerate protein folding. GroES binds to the apical surface of the GroEL ring, thereby capping the opening of the GroEL channel. This Rickettsia prowazekii (strain Madrid E) protein is Co-chaperonin GroES.